Reading from the N-terminus, the 393-residue chain is Envelope glycoprotein D (393 aa).

An N-terminal signal peptide occupies residues 1–25 (MGGAAARLGAVILFVVIVGLHGVRG). Residues 25–57 (GKYALADASLKMADPNRFRGKDLPVLDQLTDPP) are interaction with TNFRSF14. At 26–338 (KYALADASLK…PYHPPATPNN (313 aa)) the chain is on the virion surface side. His64 is a binding site for Zn(2+). 3 cysteine pairs are disulfide-bonded: Cys90–Cys213, Cys130–Cys226, and Cys142–Cys151. N-linked (GlcNAc...) asparagine; by host glycans are attached at residues Asn118 and Asn145. Asp239 is a Zn(2+) binding site. The interval 260-304 (LKIAGWHGPRAPYTSTLLPPELPETPNATQPELAPEDPEDSALLE) is profusion. The tract at residues 273-300 (TSTLLPPELPETPNATQPELAPEDPEDS) is disordered. Asn286 is a glycosylation site (N-linked (GlcNAc...) asparagine; by host). Residues 339 to 363 (MGLIAGAVGGSLLAALVICGIVYWM) traverse the membrane as a helical segment. Topologically, residues 364 to 393 (RRRTRKAPKRIRLPHIREDDQPSSHQPLFY) are intravirion.

The protein belongs to the herpesviridae glycoprotein D family. In terms of assembly, homodimer. Interacts with host receptor TNFRSF14. Interacts with host receptor NECTIN1. Interacts (via profusion domain) with gB; this interaction occurs in the absence of gH/gL. Interacts (via profusion domain) with gH/gL heterodimer; this interaction occurs in the absence of gB. Associates with the gB-gH/gL-gD complex. Interacts (via C-terminus) with UL11 tegument protein. Interacts with host RSAD2.

It is found in the virion membrane. The protein localises to the host Golgi apparatus. Envelope glycoprotein that binds to the host cell entry receptors NECTIN1, TNFRSF14/HVEM and 3-O-sulfated heparan sulfate, promoting the virus entry into host cells. May trigger fusion with host membrane, by recruiting the fusion machinery composed of gB and gH/gL. In Homo sapiens (Human), this protein is Envelope glycoprotein D (gD).